The chain runs to 310 residues: Ribosomal protein L11 methyltransferase (310 aa).

Residues Thr-153, Gly-174, Asp-196, and Asn-239 each contribute to the S-adenosyl-L-methionine site.

It belongs to the methyltransferase superfamily. PrmA family.

The protein resides in the cytoplasm. The catalysed reaction is L-lysyl-[protein] + 3 S-adenosyl-L-methionine = N(6),N(6),N(6)-trimethyl-L-lysyl-[protein] + 3 S-adenosyl-L-homocysteine + 3 H(+). Its function is as follows. Methylates ribosomal protein L11. The chain is Ribosomal protein L11 methyltransferase from Janthinobacterium sp. (strain Marseille) (Minibacterium massiliensis).